The primary structure comprises 955 residues: 2-oxoglutarate dehydrogenase E1 component (955 aa).

It belongs to the alpha-ketoglutarate dehydrogenase family. In terms of assembly, homodimer. Part of the 2-oxoglutarate dehydrogenase (OGDH) complex composed of E1 (2-oxoglutarate dehydrogenase), E2 (dihydrolipoamide succinyltransferase) and E3 (dihydrolipoamide dehydrogenase); the complex contains multiple copies of the three enzymatic components (E1, E2 and E3). It depends on thiamine diphosphate as a cofactor.

It carries out the reaction N(6)-[(R)-lipoyl]-L-lysyl-[protein] + 2-oxoglutarate + H(+) = N(6)-[(R)-S(8)-succinyldihydrolipoyl]-L-lysyl-[protein] + CO2. Its function is as follows. E1 component of the 2-oxoglutarate dehydrogenase (OGDH) complex which catalyzes the decarboxylation of 2-oxoglutarate, the first step in the conversion of 2-oxoglutarate to succinyl-CoA and CO(2). The polypeptide is 2-oxoglutarate dehydrogenase E1 component (Bacillus cereus (strain G9842)).